A 350-amino-acid chain; its full sequence is Probable choline kinase 2 (350 aa).

3 residues coordinate ATP: Arg-73, Gln-210, and Asp-227.

This sequence belongs to the choline/ethanolamine kinase family.

It catalyses the reaction choline + ATP = phosphocholine + ADP + H(+). Its pathway is phospholipid metabolism; phosphatidylcholine biosynthesis; phosphocholine from choline: step 1/1. In terms of biological role, involved in phospholipid biosynthesis. Catalyzes the first step in phosphatidylcholine biosynthesis. The protein is Probable choline kinase 2 of Arabidopsis thaliana (Mouse-ear cress).